A 308-amino-acid polypeptide reads, in one-letter code: Nodulation protein D 1 (308 aa).

The region spanning 6 to 63 (LDLNLLVALDALMTERNLTAAARSINLSQPAMSAAVGRLRVYFEDELFTMNGRELVLT) is the HTH lysR-type domain. Residues 23–42 (LTAAARSINLSQPAMSAAVG) constitute a DNA-binding region (H-T-H motif).

It belongs to the LysR transcriptional regulatory family.

Functionally, nodD regulates the expression of the nodABCFE genes which encode other nodulation proteins. NodD is also a negative regulator of its own expression. Binds flavonoids as inducers. This Rhizobium tropici protein is Nodulation protein D 1 (nodD1).